A 668-amino-acid chain; its full sequence is GTP-binding protein 1 (668 aa).

Residues 1–32 (MAAERSRSPVDSPVPASMFAPEPSSPGAARAA) form a disordered region. Phosphoserine occurs at positions 6, 8, 12, 24, 25, 44, 47, and 69. The tr-type G domain occupies 158-389 (FLEVRVAVVG…LNLLSPRTSY (232 aa)). A G1 region spans residues 167-174 (GNVDAGKS). 167-174 (GNVDAGKS) provides a ligand contact to GTP. Residues 206–210 (GRTSS) form a G2 region. Residues 252–255 (DLAG) form a G3 region. GTP contacts are provided by residues 252–256 (DLAGH) and 308–311 (TKID). Positions 308-311 (TKID) are G4. Residues 366–368 (SNV) form a G5 region. Polar residues predominate over residues 573 to 595 (LLQTTNNSPMNSKPQQIKMQSTK). Positions 573 to 668 (LLQTTNNSPM…GACVTPASGC (96 aa)) are disordered. The residue at position 580 (Ser-580) is a Phosphoserine. Positions 609 to 619 (GVPAAGGPPTG) are enriched in low complexity. The segment covering 624–637 (SLGTAQAASTSGLQ) has biased composition (polar residues). Over residues 646–657 (GRRRGGQRHKVK) the composition is skewed to basic residues.

This sequence belongs to the TRAFAC class translation factor GTPase superfamily. Classic translation factor GTPase family. GTPBP1 subfamily. Interacts with EXOSC2/RRP4, EXOSC3/RRP40, EXOSC5/RRP46, HNRNPD, HNRNPR and SYNCRIP. Identified in a complex with AANAT mRNA, but does not bind mRNA by itself. Detected in some neurons in the brain cortex. Detected in small arteries, dendritic cells and macrophages in the thymus. Detected in lung bronchi, in bronchial epithelial cells and in bronchial smooth muscle cells. Detected in smooth muscle cells in a broad range of organs (at protein level). Expressed in brain, thymus, lung, and kidney.

Its subcellular location is the cytoplasm. In terms of biological role, promotes degradation of target mRNA species. Plays a role in the regulation of circadian mRNA stability. Binds GTP and has GTPase activity. This Mus musculus (Mouse) protein is GTP-binding protein 1 (Gtpbp1).